The sequence spans 71 residues: Large ribosomal subunit protein uL29 (71 aa).

This sequence belongs to the universal ribosomal protein uL29 family.

This is Large ribosomal subunit protein uL29 from Synechococcus sp. (strain RCC307).